Consider the following 157-residue polypeptide: Transcription elongation factor GreA (157 aa).

A coiled-coil region spans residues 13–75 (RARLEAELEE…EIKSILARAQ (63 aa)).

The protein belongs to the GreA/GreB family.

Its function is as follows. Necessary for efficient RNA polymerase transcription elongation past template-encoded arresting sites. The arresting sites in DNA have the property of trapping a certain fraction of elongating RNA polymerases that pass through, resulting in locked ternary complexes. Cleavage of the nascent transcript by cleavage factors such as GreA or GreB allows the resumption of elongation from the new 3'terminus. GreA releases sequences of 2 to 3 nucleotides. This chain is Transcription elongation factor GreA, found in Roseiflexus castenholzii (strain DSM 13941 / HLO8).